The chain runs to 316 residues: Transaldolase (316 aa).

K132 acts as the Schiff-base intermediate with substrate in catalysis.

It belongs to the transaldolase family. Type 1 subfamily. As to quaternary structure, homodimer.

The protein localises to the cytoplasm. The enzyme catalyses D-sedoheptulose 7-phosphate + D-glyceraldehyde 3-phosphate = D-erythrose 4-phosphate + beta-D-fructose 6-phosphate. It participates in carbohydrate degradation; pentose phosphate pathway; D-glyceraldehyde 3-phosphate and beta-D-fructose 6-phosphate from D-ribose 5-phosphate and D-xylulose 5-phosphate (non-oxidative stage): step 2/3. Transaldolase is important for the balance of metabolites in the pentose-phosphate pathway. The protein is Transaldolase of Aeromonas salmonicida (strain A449).